The chain runs to 381 residues: MINLRKTHPLMKIINHSFIDLPAPSNISAWWNFGSLLGICLVIQILTGLFLAMHYTSDTLTAFSSVAHICRDVNYGWLIRNLHANGASMFFMCLFLHVGRGIYYGSYLYKETWNIGVMLLLTVTATAFVGYVLPWGQMSFWGATVTTNLFSAIPYIGQTLVEWAWGGFSVDKATLTRFFALHFLLPFVIAGLTLVHLTFLHETGSNNPLGIPSDCDKIPFHPYYSIKDILGLMFLLLVLLSLALFSPDLLGDPDNFSPANPLNTPPHIKPEWYFLFAYAILRSIPNKLGGVLALLASILILLVIPFLHTANQRSMMFRPISQTLFWILTANLITLTWIGGQPVEQPFIIIGQPASILYFPLIHHPMPSAGLFENYMPKPKW.

The next 4 helical transmembrane spans lie at Phe-33–Met-53, Trp-77–Val-98, Trp-113–Leu-133, and Phe-178–Thr-198. The heme b site is built by His-83 and His-97. Heme b is bound by residues His-182 and His-196. His-201 contacts a ubiquinone. 4 helical membrane-spanning segments follow: residues Ile-226 to Ser-246, Leu-288 to His-308, Ile-320 to Gly-340, and Phe-347 to Pro-367.

The protein belongs to the cytochrome b family. The cytochrome bc1 complex contains 11 subunits: 3 respiratory subunits (MT-CYB, CYC1 and UQCRFS1), 2 core proteins (UQCRC1 and UQCRC2) and 6 low-molecular weight proteins (UQCRH/QCR6, UQCRB/QCR7, UQCRQ/QCR8, UQCR10/QCR9, UQCR11/QCR10 and a cleavage product of UQCRFS1). This cytochrome bc1 complex then forms a dimer. Heme b serves as cofactor.

It localises to the mitochondrion inner membrane. In terms of biological role, component of the ubiquinol-cytochrome c reductase complex (complex III or cytochrome b-c1 complex) that is part of the mitochondrial respiratory chain. The b-c1 complex mediates electron transfer from ubiquinol to cytochrome c. Contributes to the generation of a proton gradient across the mitochondrial membrane that is then used for ATP synthesis. This chain is Cytochrome b (MT-CYB), found in Sminthopsis youngsoni (Lesser hairy-footed dunnart).